The following is a 1443-amino-acid chain: DNA polymerase III PolC-type (1443 aa).

One can recognise an Exonuclease domain in the interval 408-567 (FVIFDIETTG…YDTQALKKVF (160 aa)).

It belongs to the DNA polymerase type-C family. PolC subfamily.

The protein localises to the cytoplasm. It carries out the reaction DNA(n) + a 2'-deoxyribonucleoside 5'-triphosphate = DNA(n+1) + diphosphate. Required for replicative DNA synthesis. This DNA polymerase also exhibits 3' to 5' exonuclease activity. This is DNA polymerase III PolC-type from Mycoplasma pneumoniae (strain ATCC 29342 / M129 / Subtype 1) (Mycoplasmoides pneumoniae).